Consider the following 428-residue polypeptide: Endoplasmic reticulum junction formation protein lunapark (428 aa).

The N-myristoyl glycine moiety is linked to residue Gly2. Residues Gly2 to Arg45 lie on the Cytoplasmic side of the membrane. A coiled-coil region spans residues Glu16–Val43. Residues Leu46–Leu66 form a helical membrane-spanning segment. Over Pro67 to Thr77 the chain is Lumenal. The helical transmembrane segment at Leu78 to Phe98 threads the bilayer. Residues Ser99–Glu428 are Cytoplasmic-facing. Positions Thr102–Thr128 form a coiled coil. Ser114, Ser153, Ser177, Ser182, and Ser194 each carry phosphoserine. The tract at residues Ser143–Ile248 is disordered. Residues Gln185–Pro198 are compositionally biased toward pro residues. Phosphothreonine is present on residues Thr211 and Thr213. A phosphoserine mark is found at Ser217 and Ser227. A C4-type; plays a role in ER morphology zinc finger spans residues Cys276 to Cys301. Phosphoserine occurs at positions 321, 353, and 384. A disordered region spans residues Asn361–Glu428. Over residues Ser386–Ser401 the composition is skewed to acidic residues. At Ser414 the chain carries Phosphoserine.

It belongs to the lunapark family. Homodimer; homodimerization requires the C4-type zinc finger motif and decreases during mitosis in a phosphorylation-dependent manner. Post-translationally, myristoylated; myristoylation is necessary for the endoplasmic reticulum (ER) three-way ER tubular junction formation, but is not required neither for membrane translocation, membrane topology formation, nor for the specific localization to ER membranes. Phosphorylated. Phosphorylation occurs at Ser-177, Ser-182, Ser-217, Ser-227, Ser-321 and Ser-384 during interphase. Phosphorylation occurs at Ser-114, Ser-153, Ser-194, Thr-211 and Ser-353 during mitosis; these phosphorylations reduce both its homodimerization and the ER three-way tubular junction formation. In terms of processing, subject to proteasomal degradation following phosphorylation during mitosis.

The protein resides in the endoplasmic reticulum membrane. Endoplasmic reticulum (ER)-shaping membrane protein that plays a role in determining ER morphology. Involved in the stabilization of nascent three-way ER tubular junctions within the ER network. May also play a role as a curvature-stabilizing protein within three-way ER tubular junction network. May be involved in limb and central nervous system development. This chain is Endoplasmic reticulum junction formation protein lunapark, found in Pongo abelii (Sumatran orangutan).